The following is a 447-amino-acid chain: Probable alpha-galactosidase B (447 aa).

The signal sequence occupies residues 1–25 (MTTFFSLTTAAAVLTLARGSNALVR). 2 disulfide bridges follow: Cys-45-Cys-77 and Cys-127-Cys-157. Asp-155 (nucleophile) is an active-site residue. N-linked (GlcNAc...) asparagine glycans are attached at residues Asn-162 and Asn-180. 225 to 229 (EWGQA) contributes to the substrate binding site. An N-linked (GlcNAc...) asparagine glycan is attached at Asn-236. Asp-247 serves as the catalytic Proton donor. N-linked (GlcNAc...) asparagine glycosylation is present at Asn-286.

It belongs to the glycosyl hydrolase 27 family.

The protein resides in the secreted. The catalysed reaction is Hydrolysis of terminal, non-reducing alpha-D-galactose residues in alpha-D-galactosides, including galactose oligosaccharides, galactomannans and galactolipids.. Functionally, hydrolyzes a variety of simple alpha-D-galactoside as well as more complex molecules such as oligosaccharides and polysaccharides. The polypeptide is Probable alpha-galactosidase B (aglB) (Aspergillus fumigatus (strain ATCC MYA-4609 / CBS 101355 / FGSC A1100 / Af293) (Neosartorya fumigata)).